Consider the following 461-residue polypeptide: Diaboline synthase (461 aa).

Residues His185 and Asp400 each act as proton acceptor in the active site.

Belongs to the plant acyltransferase family. Monomer.

It is found in the cytoplasm. It carries out the reaction 17,18-epoxy-17-hydroxycur-19-ene + acetyl-CoA = diaboline + CoA. It functions in the pathway alkaloid biosynthesis. Acetyltransferase involved in the biosynthesis of curare monoterpene indole alkaloids (MIAs), natural products such as diaboline, a pharmacologically active compound used to regulate blood pressure. Curare alkaloids act as animal glycine receptor antagonists. Catalyzes the conversion of 17,18-epoxy-17-hydroxycur-19-ene (Wieland-Gumlich aldehyde) to diaboline. The polypeptide is Diaboline synthase (Strychnos sp).